Here is a 61-residue protein sequence, read N- to C-terminus: Large ribosomal subunit protein uL30 (61 aa).

The protein belongs to the universal ribosomal protein uL30 family. Part of the 50S ribosomal subunit.

The chain is Large ribosomal subunit protein uL30 from Teredinibacter turnerae (strain ATCC 39867 / T7901).